Here is a 178-residue protein sequence, read N- to C-terminus: Interleukin-10 (178 aa).

The N-terminal stretch at 1–18 is a signal peptide; that stretch reads MPGSALLCCLALLAGVKA. Disulfide bonds link Cys-30-Cys-126 and Cys-80-Cys-132. Asn-67 carries an N-linked (GlcNAc...) asparagine glycan. The N-linked (GlcNAc...) asparagine glycan is linked to Asn-134.

This sequence belongs to the IL-10 family. As to quaternary structure, homodimer. Interacts with IL10RA and IL10RB.

It localises to the secreted. Functionally, major immune regulatory cytokine that acts on many cells of the immune system where it has profound anti-inflammatory functions, limiting excessive tissue disruption caused by inflammation. Mechanistically, IL10 binds to its heterotetrameric receptor comprising IL10RA and IL10RB leading to JAK1 and STAT2-mediated phosphorylation of STAT3. In turn, STAT3 translocates to the nucleus where it drives expression of anti-inflammatory mediators. Targets antigen-presenting cells (APCs) such as macrophages and monocytes and inhibits their release of pro-inflammatory cytokines including granulocyte-macrophage colony-stimulating factor /GM-CSF, granulocyte colony-stimulating factor/G-CSF, IL-1 alpha, IL-1 beta, IL-6, IL-8 and TNF-alpha. Also interferes with antigen presentation by reducing the expression of MHC-class II and co-stimulatory molecules, thereby inhibiting their ability to induce T cell activation. In addition, controls the inflammatory response of macrophages by reprogramming essential metabolic pathways including mTOR signaling. The protein is Interleukin-10 (IL10) of Cavia porcellus (Guinea pig).